The chain runs to 174 residues: Repair DNA polymerase X (174 aa).

Residues 42–51 (REEKMLNDVD) are involved in ssDNA binding. Mg(2+)-binding residues include D49 and D51. A disulfide bond links C81 and C86. D100 contacts Mg(2+).

Belongs to the DNA polymerase type-X family. Mg(2+) is required as a cofactor.

The protein resides in the virion. It carries out the reaction DNA(n) + a 2'-deoxyribonucleoside 5'-triphosphate = DNA(n+1) + diphosphate. Functionally, error-prone polymerase lacking a proofreading 3'-5' exonuclease which catalyzes the gap-filling reaction during the DNA repair process. Specifically binds intermediates in the single-nucleotide base-excision repair process. Also catalyzes DNA polymerization with low nucleotide-insertion fidelity. Probably acts as a strategic DNA mutase, which gives rise to a rapid emergence of variants. Generates mismatched G-G pairs, in that case, the polymerase first binds the deoxynucleotide followed by mismatch formation. Together with the viral DNA ligase, fills the single nucleotide gaps generated by the AP endonuclease. Binds DNA with high affinity via the helix alphaE. This chain is Repair DNA polymerase X, found in African swine fever virus (isolate Tick/South Africa/Pretoriuskop Pr4/1996) (ASFV).